The primary structure comprises 640 residues: Threonine--tRNA ligase (640 aa).

Positions 1 to 61 (MLVVTLPDGS…DKDSQLAIIT (61 aa)) constitute a TGS domain. The tract at residues 242–533 (DHRRLGKQLD…LIENHTGNMP (292 aa)) is catalytic. 3 residues coordinate Zn(2+): C333, H384, and H510.

This sequence belongs to the class-II aminoacyl-tRNA synthetase family. Homodimer. Zn(2+) is required as a cofactor.

The protein resides in the cytoplasm. It carries out the reaction tRNA(Thr) + L-threonine + ATP = L-threonyl-tRNA(Thr) + AMP + diphosphate + H(+). Functionally, catalyzes the attachment of threonine to tRNA(Thr) in a two-step reaction: L-threonine is first activated by ATP to form Thr-AMP and then transferred to the acceptor end of tRNA(Thr). Also edits incorrectly charged L-seryl-tRNA(Thr). This chain is Threonine--tRNA ligase, found in Polynucleobacter necessarius subsp. necessarius (strain STIR1).